Here is a 585-residue protein sequence, read N- to C-terminus: MTHTLPTQNVFKRFAVYLKDFKLAFGVAIIGMVGYSLIDAYVISLLQPIIDGNGGKWDYDYLRIAAYFVIPVFIARGIFNFMGTYTLSWISSQVVMKMREQLFHQYMHLPVEFHDHHPSGQLISKVIYDTEQVAGAAGKAFLTLVREGALVFGLLFWMFYHSWQLSLVFILIGPLVAMIVSVVSKRFRLVSKNIQQAMGNLTSSAEQIIKGHKVVLMFGGQDLEASRFAKKNNNNRQQNMKLVIAQILSVSSIQVIASVALAVVLYISSKPNFITDLTPGTFVTVVVAMTMLLKPLKQLTTVNSEFQKGMAACVSIFSVLDNAIEKDTGSKVLDKAKGKLEFRDVTFHYPNKEEAALSDMSFTVEPGKTFALVGRSGSGKSTISSLLTRFYDAQQGTILLDDVPLQDFKLKDLRRQFALVSQHVTLFNDTIANNIAYGSEGRVTPEQVLAAAKTAHALEFIEQLPNGMETLIGENGLMLSGGQRQRLAIARAVLLDAPVLILDEATSALDTESERLIQDALETLQQDRTSIVVAHRLSTIESADQILVIERGRILEQGDHASLLSEDGAYAQLHKLQFGDGQTDA.

6 helical membrane-spanning segments follow: residues 23–43 (LAFG…AYVI), 64–84 (IAAY…FMGT), 140–160 (AFLT…WMFY), 163–183 (WQLS…VSVV), 247–267 (ILSV…VLYI), and 273–293 (FITD…TMLL). In terms of domain architecture, ABC transmembrane type-1 spans 27 to 308 (VAIIGMVGYS…LTTVNSEFQK (282 aa)). The ABC transporter domain occupies 340–576 (LEFRDVTFHY…DGAYAQLHKL (237 aa)). 374–381 (GRSGSGKS) serves as a coordination point for ATP.

Belongs to the ABC transporter superfamily. Lipid exporter (TC 3.A.1.106) family. As to quaternary structure, homodimer.

The protein localises to the cell inner membrane. The enzyme catalyses ATP + H2O + lipid A-core oligosaccharideSide 1 = ADP + phosphate + lipid A-core oligosaccharideSide 2.. Functionally, involved in lipopolysaccharide (LPS) biosynthesis. Translocates lipid A-core from the inner to the outer leaflet of the inner membrane. Transmembrane domains (TMD) form a pore in the inner membrane and the ATP-binding domain (NBD) is responsible for energy generation. This chain is ATP-dependent lipid A-core flippase, found in Pseudoalteromonas atlantica (strain T6c / ATCC BAA-1087).